We begin with the raw amino-acid sequence, 89 residues long: Signal recognition particle 19 kDa protein (89 aa).

This sequence belongs to the SRP19 family. In terms of assembly, part of the signal recognition particle protein translocation system, which is composed of SRP and FtsY. Archaeal SRP consists of a 7S RNA molecule of 300 nucleotides and two protein subunits: SRP54 and SRP19.

Its subcellular location is the cytoplasm. Its function is as follows. Involved in targeting and insertion of nascent membrane proteins into the cytoplasmic membrane. Binds directly to 7S RNA and mediates binding of the 54 kDa subunit of the SRP. The polypeptide is Signal recognition particle 19 kDa protein (Methanobrevibacter smithii (strain ATCC 35061 / DSM 861 / OCM 144 / PS)).